We begin with the raw amino-acid sequence, 201 residues long: Recombination protein RecR (201 aa).

The segment at 57–72 (CQVCYSLSDNDICDIC) adopts a C4-type zinc-finger fold. The 98-residue stretch at 80-177 (NKICIVESYP…RITRITYGIS (98 aa)) folds into the Toprim domain.

It belongs to the RecR family.

Its function is as follows. May play a role in DNA repair. It seems to be involved in an RecBC-independent recombinational process of DNA repair. It may act with RecF and RecO. This chain is Recombination protein RecR, found in Brachyspira hyodysenteriae (strain ATCC 49526 / WA1).